A 263-amino-acid polypeptide reads, in one-letter code: Putative S-adenosyl-L-methionine-dependent methyltransferase Mkms_0098 (263 aa).

S-adenosyl-L-methionine-binding positions include D121 and 150–151 (ES).

It belongs to the UPF0677 family.

Functionally, exhibits S-adenosyl-L-methionine-dependent methyltransferase activity. The chain is Putative S-adenosyl-L-methionine-dependent methyltransferase Mkms_0098 from Mycobacterium sp. (strain KMS).